The sequence spans 429 residues: MKTIDLFCGAGGLGEGFRQAGFSALYANDHETPALATYKENHPDAVCSTDSIETVDPKKIREDLGVAPGQVDVVMGGPPCQGFSTYGQRRDDDARNQLYVPYFGFVEEFRPKAFLIENVVGLLSMSGGAVLADMVARAEALGYAADVVTLDACEYGVPQHRRRVFIFGAADGQRIDPPQPSHVNGKRSGVVLNDQPSLFFDGPSIQPALTVRDAISDLPDEVLVPRDTQKPMEYPEPPKTEYQRLMRGNSTELTHHSAKRMLGIRRLRLAMLHPGDYGTKIEERLADGGLNDELIDLMMGGAGMRDAAECRTQDREKEAALREVLKGGHTTPAKVMEFLDSQGFANKYRRLRWDAPSHTVVAHMARDCSDFVHPGIDRFVSVREAARFQSFPDTYRFPGSQFRQFRQIGNAVPPLLGRAMAETIKVAIS.

Residues 1–429 (MKTIDLFCGA…MAETIKVAIS (429 aa)) enclose the SAM-dependent MTase C5-type domain. The active site involves cysteine 80.

This sequence belongs to the class I-like SAM-binding methyltransferase superfamily. C5-methyltransferase family.

It catalyses the reaction a 2'-deoxycytidine in DNA + S-adenosyl-L-methionine = a 5-methyl-2'-deoxycytidine in DNA + S-adenosyl-L-homocysteine + H(+). A methylase, recognizes the double-stranded sequence 5'-ACCGGT-3', methylates C-3 on both strands, and protects the DNA from cleavage by the AgeI endonuclease. The sequence is that of Type II methyltransferase M.AgeI (ageIM) from Thalassovita gelatinovora (Thalassobius gelatinovorus).